A 263-amino-acid polypeptide reads, in one-letter code: Putative 2-aminoethylphosphonate transport system permease protein PhnV (263 aa).

6 helical membrane passes run 13–33, 69–89, 104–124, 131–151, 185–205, and 233–253; these read GVVA…VILM, LTIG…AALA, VFYL…LVAF, MNGT…AFTF, LPLL…LSMG, and NIAD…LLMM. The ABC transmembrane type-1 domain maps to 65 to 253; that stretch reads LLASLTIGFC…LVAITLLLMM (189 aa).

This sequence belongs to the binding-protein-dependent transport system permease family.

Its subcellular location is the cell inner membrane. In terms of biological role, probably part of the PhnSTUV complex (TC 3.A.1.11.5) involved in 2-aminoethylphosphonate import. Probably responsible for the translocation of the substrate across the membrane. In Salmonella typhi, this protein is Putative 2-aminoethylphosphonate transport system permease protein PhnV (phnV).